We begin with the raw amino-acid sequence, 161 residues long: MKSLQKGFTLIELMIVVAIIGILAAFAIPAYNDYIARSQAAEGVSLADGLKVRIAENLQDGECKGPDADPQSGVVGNEDKGKYGLAKIEGDYDASKTEAGDPNGCKVEITYGQGTAGDKISKLITGKKLVLDQLVNGSFVQGDGTDLADKFIPNAVKAKKP.

Positions 1–7 (MKSLQKG) are cleaved as a propeptide — leader sequence. The residue at position 8 (phenylalanine 8) is an N-methylphenylalanine. The chain crosses the membrane as a helical span at residues 8-28 (FTLIELMIVVAIIGILAAFAI). Cysteine 63 and cysteine 105 are oxidised to a cystine.

The protein belongs to the N-Me-Phe pilin family. In terms of assembly, the pili are polar flexible filaments of about 5.4 nanometers diameter and 2.5 micrometers average length; they consist of only a single polypeptide chain arranged in a helical configuration of five subunits per turn in the assembled pilus.

The protein localises to the fimbrium. It localises to the membrane. Functionally, major component of the type IV fimbriae that plays an essential role in twitching motility, natural transformation, and protease secretion. This is Type IV major fimbrial protein FimA (fimA) from Dichelobacter nodosus (Bacteroides nodosus).